Consider the following 108-residue polypeptide: UPF0102 protein Shewmr4_3685 (108 aa).

The protein belongs to the UPF0102 family.

This is UPF0102 protein Shewmr4_3685 from Shewanella sp. (strain MR-4).